A 1009-amino-acid polypeptide reads, in one-letter code: Type VII secretion system accessory factor EsaA (1009 aa).

6 helical membrane passes run 7-27 (IYALIVTLIIIIAIVSMIFFV), 822-842 (ISPTLFVLLMYLLSMITAYIF), 869-889 (VITSGVIGTTGLVEGLIVGLI), 903-923 (KFILMVILTMMVFVLINTYLL), 928-948 (SIGMFLMIAALGLYFVAMNNL), and 979-999 (IGLALVILTVLVIIGFVLNMF).

Belongs to the EsaA family. As to quaternary structure, homodimer. Interacts with EssB.

Its subcellular location is the cell membrane. Its function is as follows. Component of the type VII secretion system (Ess). Provides together with EssB and other components such as EssC and EssE a secretion platform across the cytoplasmic membrane in the host. The protein is Type VII secretion system accessory factor EsaA of Staphylococcus aureus (strain Mu50 / ATCC 700699).